The following is a 610-amino-acid chain: MSDQFDAKAFLKTVTSQPGVYRMYDAGGTVIYVGKAKDLKKRLSSYFRSNLASRKTEALVAQIQQIDVTVTHTETEALLLEHNYIKLYQPRYNVLLRDDKSYPFIFLSGDTHPRLAMHRGAKHAKGEYFGPFPNGYAVRETLALLQKIFPIRQCENSVYRNRSRPCLQYQIGRCLGPCVEGLVSEEEYAQQVEYVRLFLSGKDDQVLTQLISRMETASQNLEFEEAARIRDQIQAVRRVTEKQFVSNTGDDLDVIGVAFDAGMACVHVLFIRQGKVLGSRSYFPKVPGGTELSEVVETFVGQFYLQGSQMRTLPGEILLDFNLSDKTLLADSLSELAGRKINVQTKPRGDRARYLKLARTNAATALTSKLSQQSTVHQRLTALASVLKLPEVKRMECFDISHTMGEQTVASCVVFDANGPLRAEYRRYNITGIRPGDDYAAMNQVLRRRYGKAIDDSKIPDVILIDGGKGQLAQAKNVFAELDVSWDKNHPLLLGVAKGADRKAGLETLFFEPEGEGFSLPPDSPALHVIQHIRDESHDHAIGGHRKKRAKVKNTSSLETIEGVGPKRRQMLLKYMGGLQGLRNASVEEIAKVPGISQGLAEKIFWSLKH.

The 79-residue stretch at 16–94 (SQPGVYRMYD…IKLYQPRYNV (79 aa)) folds into the GIY-YIG domain. Positions 204 to 239 (DQVLTQLISRMETASQNLEFEEAARIRDQIQAVRRV) constitute a UVR domain.

The protein belongs to the UvrC family. In terms of assembly, interacts with UvrB in an incision complex.

It localises to the cytoplasm. Functionally, the UvrABC repair system catalyzes the recognition and processing of DNA lesions. UvrC both incises the 5' and 3' sides of the lesion. The N-terminal half is responsible for the 3' incision and the C-terminal half is responsible for the 5' incision. This chain is UvrABC system protein C, found in Escherichia coli (strain SMS-3-5 / SECEC).